Consider the following 95-residue polypeptide: Protein TusB (95 aa).

Belongs to the DsrH/TusB family. In terms of assembly, heterohexamer, formed by a dimer of trimers. The hexameric TusBCD complex contains 2 copies each of TusB, TusC and TusD. The TusBCD complex interacts with TusE.

Its subcellular location is the cytoplasm. Its function is as follows. Part of a sulfur-relay system required for 2-thiolation of 5-methylaminomethyl-2-thiouridine (mnm(5)s(2)U) at tRNA wobble positions. The chain is Protein TusB from Salmonella agona (strain SL483).